A 186-amino-acid chain; its full sequence is Peptidyl-tRNA hydrolase (186 aa).

Tyr-14 is a tRNA binding site. His-19 functions as the Proton acceptor in the catalytic mechanism. TRNA is bound by residues Tyr-61, Asn-63, and Asn-107.

Belongs to the PTH family. Monomer.

The protein localises to the cytoplasm. It carries out the reaction an N-acyl-L-alpha-aminoacyl-tRNA + H2O = an N-acyl-L-amino acid + a tRNA + H(+). Its function is as follows. Hydrolyzes ribosome-free peptidyl-tRNAs (with 1 or more amino acids incorporated), which drop off the ribosome during protein synthesis, or as a result of ribosome stalling. Catalyzes the release of premature peptidyl moieties from peptidyl-tRNA molecules trapped in stalled 50S ribosomal subunits, and thus maintains levels of free tRNAs and 50S ribosomes. This Helicobacter pylori (strain Shi470) protein is Peptidyl-tRNA hydrolase.